Reading from the N-terminus, the 596-residue chain is MKHIRNFSIIAHIDHGKSTLSDRLIQVCGGLSDREMDAQVLDSMDLERERGITIKAQSVTLEYKAKNGETYQLNFIDTPGHVDFSYEVSRSLAACEGALLVVDAGQGVEAQTLANCYTALDMNLDVVPILNKIDLPQADPERVAAEIEDIVGIDAMNAVRCSAKTGVGIDEVLEVIVEQIPPPEGDPEAPLQALIIDSWFDSYLGVVSLVRIKNGVLKKGDKFKVMSTGQNHTADRVGIFTPKQTDKTELKTGEVGFVIAGIKEIHGAPVGDTLTLAKHGAEKPLPGFKKVKPQVYAGVFPISTDEYENFRDALNKLSLNDASLFFEPESSSALGFGFRIGYLGLLHMEIIQERLEREYDLDLITTAPTVVYEVLLTSGETVYVDNPADLPAINNIEEMREPIVEANILVPKEYLGNVITLCIEKRGTQVNMVYHGNQVAVTYHLPMAEVVMDFFDRLKSTSRGYASLEYNFIRFDPADMVRLDILINGDRVDALAMIIHRSNIRHRGLALVEKMKELIPRQMFDIAIQAAVGSQIIARSTVKALRKDVTAKCYGGDVSRKKKLLNKQKEGKKRMKQVGNVEVPQEAFLAVLKLNE.

Positions lysine 2–glutamate 184 constitute a tr-type G domain. GTP is bound by residues aspartate 14–threonine 19 and asparagine 131–aspartate 134.

The protein belongs to the TRAFAC class translation factor GTPase superfamily. Classic translation factor GTPase family. LepA subfamily.

Its subcellular location is the cell inner membrane. It catalyses the reaction GTP + H2O = GDP + phosphate + H(+). Its function is as follows. Required for accurate and efficient protein synthesis under certain stress conditions. May act as a fidelity factor of the translation reaction, by catalyzing a one-codon backward translocation of tRNAs on improperly translocated ribosomes. Back-translocation proceeds from a post-translocation (POST) complex to a pre-translocation (PRE) complex, thus giving elongation factor G a second chance to translocate the tRNAs correctly. Binds to ribosomes in a GTP-dependent manner. This Shewanella sp. (strain MR-7) protein is Elongation factor 4.